The primary structure comprises 119 residues: Holo-[acyl-carrier-protein] synthase (119 aa).

D5 and E51 together coordinate Mg(2+).

This sequence belongs to the P-Pant transferase superfamily. AcpS family. The cofactor is Mg(2+).

Its subcellular location is the cytoplasm. The catalysed reaction is apo-[ACP] + CoA = holo-[ACP] + adenosine 3',5'-bisphosphate + H(+). Its function is as follows. Transfers the 4'-phosphopantetheine moiety from coenzyme A to a Ser of acyl-carrier-protein. In Helicobacter pylori (strain G27), this protein is Holo-[acyl-carrier-protein] synthase.